A 248-amino-acid chain; its full sequence is Urease accessory protein UreG 1 (248 aa).

Basic and acidic residues predominate over residues 1 to 14 (MLPEHHDHGHEHGG). The segment at 1–36 (MLPEHHDHGHEHGGNGHGHGHRHQVNFDPTAAEPDP) is disordered. Residue 53–60 (GPVGSGKT) coordinates GTP.

It belongs to the SIMIBI class G3E GTPase family. UreG subfamily. As to quaternary structure, homodimer. UreD, UreF and UreG form a complex that acts as a GTP-hydrolysis-dependent molecular chaperone, activating the urease apoprotein by helping to assemble the nickel containing metallocenter of UreC. The UreE protein probably delivers the nickel.

The protein localises to the cytoplasm. Its function is as follows. Facilitates the functional incorporation of the urease nickel metallocenter. This process requires GTP hydrolysis, probably effectuated by UreG. The chain is Urease accessory protein UreG 1 from Saccharopolyspora erythraea (strain ATCC 11635 / DSM 40517 / JCM 4748 / NBRC 13426 / NCIMB 8594 / NRRL 2338).